Here is a 342-residue protein sequence, read N- to C-terminus: Ribosomal RNA small subunit methyltransferase C (342 aa).

This sequence belongs to the methyltransferase superfamily. RsmC family. Monomer.

The protein localises to the cytoplasm. The enzyme catalyses guanosine(1207) in 16S rRNA + S-adenosyl-L-methionine = N(2)-methylguanosine(1207) in 16S rRNA + S-adenosyl-L-homocysteine + H(+). Its function is as follows. Specifically methylates the guanine in position 1207 of 16S rRNA in the 30S particle. This chain is Ribosomal RNA small subunit methyltransferase C, found in Salmonella agona (strain SL483).